We begin with the raw amino-acid sequence, 162 residues long: NADH-ubiquinone oxidoreductase subunit 8 (162 aa).

2 4Fe-4S ferredoxin-type domains span residues 54 to 83 and 93 to 122; these read RRYQ…IESE and TRYD…EGPN. [4Fe-4S] cluster contacts are provided by Cys63, Cys66, Cys69, Cys73, Cys102, Cys105, Cys108, and Cys112.

This sequence belongs to the complex I 23 kDa subunit family. [4Fe-4S] cluster is required as a cofactor.

It localises to the mitochondrion. It catalyses the reaction a ubiquinone + NADH + 5 H(+)(in) = a ubiquinol + NAD(+) + 4 H(+)(out). Its function is as follows. Core subunit of the mitochondrial membrane respiratory chain NADH dehydrogenase (Complex I) that is believed to belong to the minimal assembly required for catalysis. Complex I functions in the transfer of electrons from NADH to the respiratory chain. The immediate electron acceptor for the enzyme is believed to be ubiquinone. May donate electrons to ubiquinone. The protein is NADH-ubiquinone oxidoreductase subunit 8 (NAD8) of Reclinomonas americana.